Here is a 203-residue protein sequence, read N- to C-terminus: Small ribosomal subunit protein uS4 (203 aa).

Residues 20 to 44 (LPGLTRKRPKNTNPPGMHGAERKKK) form a disordered region. The region spanning 92 to 155 (MRLDCIVFRL…SSRKLVAAYA (64 aa)) is the S4 RNA-binding domain.

Belongs to the universal ribosomal protein uS4 family. Part of the 30S ribosomal subunit. Contacts protein S5. The interaction surface between S4 and S5 is involved in control of translational fidelity.

Functionally, one of the primary rRNA binding proteins, it binds directly to 16S rRNA where it nucleates assembly of the body of the 30S subunit. In terms of biological role, with S5 and S12 plays an important role in translational accuracy. The sequence is that of Small ribosomal subunit protein uS4 from Synechococcus sp. (strain JA-2-3B'a(2-13)) (Cyanobacteria bacterium Yellowstone B-Prime).